The chain runs to 604 residues: Protein hemingway (604 aa).

Disordered regions lie at residues 1-70 (MSGA…GNPH), 103-309 (NQLS…PTSQ), 359-387 (SDRRGDTESEMSSMTETTMTSARSLGGGI), and 544-585 (TIKA…IDLD). 4 stretches are compositionally biased toward acidic residues: residues 8-38 (SDEESYGEESFEEDSESEVEVEEEEIEYIEP), 135-183 (EDEA…DDAQ), 194-214 (DDSDEEEGTDVEVEQLEEDEP), and 288-300 (EEPEEPEQPEENQ). Over residues 368–379 (EMSSMTETTMTS) the composition is skewed to low complexity.

Belongs to the CFAP97 family. As to expression, detected in ciliated sensory neurons at all stages of development, and in adult testis.

The protein localises to the cell projection. It localises to the cilium. Its subcellular location is the perikaryon. It is found in the cytoplasm. Its function is as follows. Involved in assembly and/or maintenance of motile cilia. Required during spermatogenesis for axoneme elongation. Necessary for optimal function of the chordotonal (hearing) organs. The protein is Protein hemingway of Drosophila melanogaster (Fruit fly).